Here is a 430-residue protein sequence, read N- to C-terminus: Elongation factor 1-gamma (430 aa).

The region spanning 2-84 (VAGKLYTYPE…YVANETLRGS (83 aa)) is the GST N-terminal domain. The region spanning 85–213 (SDLEKAQIIQ…FKLCEKAGEF (129 aa)) is the GST C-terminal domain. 2 stretches are compositionally biased toward basic and acidic residues: residues 232–255 (KTEK…KEQE) and 269–278 (PKSKDPFDEM). The tract at residues 232-278 (KTEKAPKAVKAKPEKKEVPKKEQEEPADAAEEALAAEPKSKDPFDEM) is disordered. Positions 271–430 (SKDPFDEMPK…RKFNQGKIFK (160 aa)) constitute an EF-1-gamma C-terminal domain.

In terms of assembly, EF-1 is composed of four subunits: alpha, beta, delta, and gamma.

Functionally, probably plays a role in anchoring the complex to other cellular components. The chain is Elongation factor 1-gamma from Artemia salina (Brine shrimp).